The primary structure comprises 210 residues: 7-cyano-7-deazaguanine synthase 2 (210 aa).

Residue 10 to 20 (HSGGMDSTTCL) participates in ATP binding. The Zn(2+) site is built by Cys180, Cys193, Cys196, and Cys199.

The protein belongs to the QueC family. Zn(2+) serves as cofactor.

The catalysed reaction is 7-carboxy-7-deazaguanine + NH4(+) + ATP = 7-cyano-7-deazaguanine + ADP + phosphate + H2O + H(+). It participates in purine metabolism; 7-cyano-7-deazaguanine biosynthesis. Its function is as follows. Catalyzes the ATP-dependent conversion of 7-carboxy-7-deazaguanine (CDG) to 7-cyano-7-deazaguanine (preQ(0)). The protein is 7-cyano-7-deazaguanine synthase 2 of Rhodopseudomonas palustris (strain HaA2).